The primary structure comprises 257 residues: Imidazole glycerol phosphate synthase subunit HisF (257 aa).

Active-site residues include Asp11 and Asp130.

The protein belongs to the HisA/HisF family. In terms of assembly, heterodimer of HisH and HisF.

The protein resides in the cytoplasm. It catalyses the reaction 5-[(5-phospho-1-deoxy-D-ribulos-1-ylimino)methylamino]-1-(5-phospho-beta-D-ribosyl)imidazole-4-carboxamide + L-glutamine = D-erythro-1-(imidazol-4-yl)glycerol 3-phosphate + 5-amino-1-(5-phospho-beta-D-ribosyl)imidazole-4-carboxamide + L-glutamate + H(+). Its pathway is amino-acid biosynthesis; L-histidine biosynthesis; L-histidine from 5-phospho-alpha-D-ribose 1-diphosphate: step 5/9. In terms of biological role, IGPS catalyzes the conversion of PRFAR and glutamine to IGP, AICAR and glutamate. The HisF subunit catalyzes the cyclization activity that produces IGP and AICAR from PRFAR using the ammonia provided by the HisH subunit. This chain is Imidazole glycerol phosphate synthase subunit HisF, found in Aliivibrio fischeri (strain MJ11) (Vibrio fischeri).